The primary structure comprises 310 residues: Putative integrase/recombinase y4rE (310 aa).

In terms of domain architecture, Core-binding (CB) spans 6–83 (RFLGEKVERY…VLRRFYEYLA (78 aa)). Residues 104–301 (PPPRILSEAE…SVDLLAMAAE (198 aa)) form the Tyr recombinase domain. Active-site residues include R148, K173, H245, R248, and H279. The active-site O-(3'-phospho-DNA)-tyrosine intermediate is the Y288.

The protein belongs to the 'phage' integrase family.

This is Putative integrase/recombinase y4rE from Sinorhizobium fredii (strain NBRC 101917 / NGR234).